Reading from the N-terminus, the 334-residue chain is Cytochrome c551 peroxidase (334 aa).

Residues Met1–Ala26 form the signal peptide. Heme c-binding residues include Cys65, Cys68, His69, Cys209, Cys212, His213, His270, and Met284. The disordered stretch occupies residues Phe315–Glu334. Residues Pro322–Glu334 show a composition bias toward polar residues.

Binds 2 heme c groups covalently per subunit.

Its subcellular location is the periplasm. The catalysed reaction is 2 Fe(II)-[cytochrome c] + H2O2 + 2 H(+) = 2 Fe(III)-[cytochrome c] + 2 H2O. The polypeptide is Cytochrome c551 peroxidase (ccp) (Nitrosomonas europaea (strain ATCC 19718 / CIP 103999 / KCTC 2705 / NBRC 14298)).